Consider the following 211-residue polypeptide: Imidazole glycerol phosphate synthase subunit HisH (211 aa).

The Glutamine amidotransferase type-1 domain maps to 4-211; the sequence is RVVILDYGSG…QLLANWVATL (208 aa). Catalysis depends on Cys-82, which acts as the Nucleophile. Active-site residues include His-192 and Glu-194.

Heterodimer of HisH and HisF.

It is found in the cytoplasm. The enzyme catalyses 5-[(5-phospho-1-deoxy-D-ribulos-1-ylimino)methylamino]-1-(5-phospho-beta-D-ribosyl)imidazole-4-carboxamide + L-glutamine = D-erythro-1-(imidazol-4-yl)glycerol 3-phosphate + 5-amino-1-(5-phospho-beta-D-ribosyl)imidazole-4-carboxamide + L-glutamate + H(+). It catalyses the reaction L-glutamine + H2O = L-glutamate + NH4(+). It functions in the pathway amino-acid biosynthesis; L-histidine biosynthesis; L-histidine from 5-phospho-alpha-D-ribose 1-diphosphate: step 5/9. In terms of biological role, IGPS catalyzes the conversion of PRFAR and glutamine to IGP, AICAR and glutamate. The HisH subunit catalyzes the hydrolysis of glutamine to glutamate and ammonia as part of the synthesis of IGP and AICAR. The resulting ammonia molecule is channeled to the active site of HisF. This is Imidazole glycerol phosphate synthase subunit HisH from Thermobifida fusca (strain YX).